We begin with the raw amino-acid sequence, 150 residues long: Large ribosomal subunit protein bL9 (150 aa).

The protein belongs to the bacterial ribosomal protein bL9 family.

Binds to the 23S rRNA. The polypeptide is Large ribosomal subunit protein bL9 (Mycoplasmopsis pulmonis (strain UAB CTIP) (Mycoplasma pulmonis)).